The chain runs to 461 residues: Argininosuccinate lyase (461 aa).

The protein belongs to the lyase 1 family. Argininosuccinate lyase subfamily.

The protein localises to the cytoplasm. The catalysed reaction is 2-(N(omega)-L-arginino)succinate = fumarate + L-arginine. Its pathway is amino-acid biosynthesis; L-arginine biosynthesis; L-arginine from L-ornithine and carbamoyl phosphate: step 3/3. The sequence is that of Argininosuccinate lyase from Shewanella piezotolerans (strain WP3 / JCM 13877).